The following is a 294-amino-acid chain: Protease HtpX (294 aa).

The next 2 membrane-spanning stretches (helical) occupy residues 4-24 (ILLF…ILFI) and 33-53 (FGLI…SLLL). Position 139 (His-139) interacts with Zn(2+). The active site involves Glu-140. His-143 contacts Zn(2+). A run of 2 helical transmembrane segments spans residues 147-167 (GDMI…IFLS) and 197-217 (FFIS…ITFW). Glu-223 contributes to the Zn(2+) binding site.

The protein belongs to the peptidase M48B family. The cofactor is Zn(2+).

Its subcellular location is the cell membrane. This chain is Protease HtpX, found in Wigglesworthia glossinidia brevipalpis.